A 466-amino-acid polypeptide reads, in one-letter code: Phosphoenolpyruvate carboxykinase (ATP) (466 aa).

Arg-61, Tyr-196, and Lys-202 together coordinate substrate. ATP contacts are provided by residues Lys-202, His-221, and 237-245; that span reads GLSGTGKTT. Mn(2+) contacts are provided by Lys-202 and His-221. Asp-258 is a Mn(2+) binding site. Residues Glu-286, Arg-323, and Thr-448 each contribute to the ATP site. Arg-323 is a binding site for substrate.

The protein belongs to the phosphoenolpyruvate carboxykinase (ATP) family. It depends on Mn(2+) as a cofactor.

Its subcellular location is the cytoplasm. It carries out the reaction oxaloacetate + ATP = phosphoenolpyruvate + ADP + CO2. It participates in carbohydrate biosynthesis; gluconeogenesis. Its function is as follows. Involved in the gluconeogenesis. Catalyzes the conversion of oxaloacetate (OAA) to phosphoenolpyruvate (PEP) through direct phosphoryl transfer between the nucleoside triphosphate and OAA. In Deinococcus radiodurans (strain ATCC 13939 / DSM 20539 / JCM 16871 / CCUG 27074 / LMG 4051 / NBRC 15346 / NCIMB 9279 / VKM B-1422 / R1), this protein is Phosphoenolpyruvate carboxykinase (ATP).